The chain runs to 625 residues: tRNA uridine 5-carboxymethylaminomethyl modification enzyme MnmG (625 aa).

FAD is bound by residues Gly-11–Gly-16, Val-123, and Ser-178. Gly-271–Phe-285 lines the NAD(+) pocket. An FAD-binding site is contributed by Gln-368.

The protein belongs to the MnmG family. As to quaternary structure, homodimer. Heterotetramer of two MnmE and two MnmG subunits. Requires FAD as cofactor.

It is found in the cytoplasm. Functionally, NAD-binding protein involved in the addition of a carboxymethylaminomethyl (cmnm) group at the wobble position (U34) of certain tRNAs, forming tRNA-cmnm(5)s(2)U34. The sequence is that of tRNA uridine 5-carboxymethylaminomethyl modification enzyme MnmG from Bacteroides fragilis (strain ATCC 25285 / DSM 2151 / CCUG 4856 / JCM 11019 / LMG 10263 / NCTC 9343 / Onslow / VPI 2553 / EN-2).